A 166-amino-acid chain; its full sequence is Ribonuclease H (166 aa).

In terms of domain architecture, RNase H type-1 spans 5–147; it reads PRKRVALFTD…VDREARRQAQ (143 aa). Mg(2+)-binding residues include D14, E52, D74, and D139. A disordered region spans residues 128–166; it reads GHTGHPENERVDREARRQAQSQAKTPCPPRAPTLFHEEA. Residues 131–144 show a composition bias toward basic and acidic residues; that stretch reads GHPENERVDREARR.

Belongs to the RNase H family. In terms of assembly, monomer. It depends on Mg(2+) as a cofactor.

It catalyses the reaction Endonucleolytic cleavage to 5'-phosphomonoester.. In terms of biological role, endonuclease that specifically degrades the RNA of RNA-DNA hybrids. This Thermus thermophilus (strain ATCC 27634 / DSM 579 / HB8) protein is Ribonuclease H (rnhA).